The chain runs to 428 residues: Histone deacetylase 3 (428 aa).

Positions 3–316 (KTVAYFYDPD…WTYETSLLVD (314 aa)) are histone deacetylase. 1D-myo-inositol 1,4,5,6-tetrakisphosphate contacts are provided by His17, Gly21, and Lys25. Residue His135 is part of the active site. Positions 170, 172, and 259 each coordinate Zn(2+). Arg265 serves as a coordination point for 1D-myo-inositol 1,4,5,6-tetrakisphosphate. The tract at residues 385–428 (LSYDRTDEPDPEERGSEENYSRPEAANEFYDGDHDNDKESDVEI) is disordered. Basic and acidic residues-rich tracts occupy residues 386-405 (SYDR…ENYS) and 415-428 (DGDH…DVEI).

It belongs to the histone deacetylase family. HD type 1 subfamily.

The protein localises to the nucleus. It localises to the chromosome. It is found in the cytoplasm. The protein resides in the cytosol. The enzyme catalyses N(6)-acetyl-L-lysyl-[histone] + H2O = L-lysyl-[histone] + acetate. It carries out the reaction N(6)-acetyl-L-lysyl-[protein] + H2O = L-lysyl-[protein] + acetate. The catalysed reaction is N(6)-(2E)-butenoyl-L-lysyl-[protein] + H2O = (2E)-2-butenoate + L-lysyl-[protein]. It catalyses the reaction N(6)-(2-hydroxyisobutanoyl)-L-lysyl-[protein] + H2O = 2-hydroxy-2-methylpropanoate + L-lysyl-[protein]. The enzyme catalyses N(6)-[(S)-lactoyl]-L-lysyl-[protein] + H2O = (S)-lactate + L-lysyl-[protein]. Inositol tetraphosphate (1D-myo-inositol 1,4,5,6-tetrakisphosphate) promotes the histone deacetylase activity by acting as an intermolecular glue between HDAC3 and N-Cor repressor complex components. Its function is as follows. Histone deacetylase that catalyzes the deacetylation of lysine residues on the N-terminal part of the core histones (H2A, H2B, H3 and H4), and some other non-histone substrates. Histone deacetylation gives a tag for epigenetic repression and plays an important role in transcriptional regulation, cell cycle progression and developmental events. Histone deacetylases act via the formation of large multiprotein complexes, such as N-Cor repressor complex, which activate the histone deacetylase activity. Participates in the BCL6 transcriptional repressor activity by deacetylating the H3 'Lys-27' (H3K27) on enhancer elements, antagonizing EP300 acetyltransferase activity and repressing proximal gene expression. Also functions as a deacetylase for non-histone targets. In addition to protein deacetylase activity, also acts as a protein-lysine deacylase by recognizing other acyl groups: catalyzes removal of (2E)-butenoyl (crotonyl), lactoyl (lactyl) and 2-hydroxyisobutanoyl (2-hydroxyisobutyryl) acyl groups from lysine residues, leading to protein decrotonylation, delactylation and de-2-hydroxyisobutyrylation, respectively. The sequence is that of Histone deacetylase 3 (HDAC3) from Gallus gallus (Chicken).